The primary structure comprises 737 residues: Palmitoyltransferase AKR1 (737 aa).

Positions 1 to 47 (MKQIDSEDSITVPNDTPEDNSASSMQPVMSNLSIEEHQSENEPIEQE) are disordered. Topologically, residues 1-304 (MKQIDSEDSI…VYFKKSLHTK (304 aa)) are cytoplasmic. A compositionally biased stretch (polar residues) spans 9–33 (SITVPNDTPEDNSASSMQPVMSNLS). ANK repeat units lie at residues 54–84 (PLLS…DLKH), 90–119 (ERVS…DVNF), 124–153 (LNAT…DPSV), 157–190 (QGFN…DIDC), 194–223 (NGRT…SVKA), and 227–256 (GGFT…DFFQ). Transmembrane regions (helical) follow at residues 305 to 325 (LVTF…FASI) and 326 to 346 (HPIF…YTLK). At 347-364 (KYVIPAYAQRNTRQSFLK) the chain is on the cytoplasmic side. Residues 365 to 385 (TPFLAGVFSGSVFWASYTWLT) form a helical membrane-spanning segment. The Lumenal segment spans residues 386-396 (RIMPLTLIEEP). The chain crosses the membrane as a helical span at residues 397–417 (ITNLLFFAGVVLLASLFVKLV). At 418–493 (RSDPGLIPEE…YNDIGLRNHK (76 aa)) the chain is on the cytoplasmic side. A DHHC domain is found at 450–500 (HFCISTWVRKPIRSKFSNFSRALVTRFDHFCPWIYNDIGLRNHKTFLFFIL). The active-site S-palmitoyl cysteine intermediate is Cys480. A helical membrane pass occupies residues 494 to 514 (TFLFFILCLETCIFVFLKLCM). Topologically, residues 515–547 (EYFDVLEDTFEDDYDLNCGIFGEDLCAGFFFDT) are lumenal. Residues 548 to 568 (FTFLVLAWTCFQGIWVGFLTF) traverse the membrane as a helical segment. Over 569-737 (VQLFQTAKGV…ERHYLAEEIV (169 aa)) the chain is Cytoplasmic.

This sequence belongs to the DHHC palmitoyltransferase family. AKR/ZDHHC17 subfamily.

It is found in the early endosome membrane. The protein resides in the golgi apparatus membrane. The catalysed reaction is L-cysteinyl-[protein] + hexadecanoyl-CoA = S-hexadecanoyl-L-cysteinyl-[protein] + CoA. In terms of biological role, palmitoyltransferase specific for casein kinase 1. In Lachancea kluyveri (strain ATCC 58438 / CBS 3082 / BCRC 21498 / NBRC 1685 / JCM 7257 / NCYC 543 / NRRL Y-12651) (Yeast), this protein is Palmitoyltransferase AKR1 (AKR1).